The following is a 204-amino-acid chain: CASP-like protein 1U3 (204 aa).

Residues 1–19 (MCEGEKKKDSSSGALYCVN) are Cytoplasmic-facing. Residues 20-40 (LALRIVVLGLAVAAAALMATA) traverse the membrane as a helical segment. The Extracellular segment spans residues 41–63 (SQCTIFLYYGGPLHTITYKDFGP). The helical transmembrane segment at 64 to 84 (FVYLVVASSIGAFMEAIAIFL) threads the bilayer. Residues 85–97 (TICKKKDGTPAKV) lie on the Cytoplasmic side of the membrane. A helical membrane pass occupies residues 98–118 (LLPLLDAAVPVLLYSATAAAF). At 119-146 (AAGDMSYCAVGKRVGVCTTAAAGNFCNQ) the chain is on the extracellular side. Residues 147–167 (VHIAMYVSLAAGVALLVAEIV) traverse the membrane as a helical segment. The Cytoplasmic segment spans residues 168 to 204 (KHWPDSGKKKEGGGGGCGSDSDSDKSTPCHHGCHSKH). A disordered region spans residues 173 to 204 (SGKKKEGGGGGCGSDSDSDKSTPCHHGCHSKH).

This sequence belongs to the Casparian strip membrane proteins (CASP) family. Homodimer and heterodimers.

It is found in the cell membrane. This chain is CASP-like protein 1U3, found in Oryza sativa subsp. japonica (Rice).